A 120-amino-acid polypeptide reads, in one-letter code: Glycine cleavage system H protein (120 aa).

A Lipoyl-binding domain is found at 17–99 (IATVGITAHA…RGAGWFFKLK (83 aa)). Residue Lys58 is modified to N6-lipoyllysine.

This sequence belongs to the GcvH family. The glycine cleavage system is composed of four proteins: P, T, L and H. It depends on (R)-lipoate as a cofactor.

In terms of biological role, the glycine cleavage system catalyzes the degradation of glycine. The H protein shuttles the methylamine group of glycine from the P protein to the T protein. The protein is Glycine cleavage system H protein of Allorhizobium ampelinum (strain ATCC BAA-846 / DSM 112012 / S4) (Agrobacterium vitis (strain S4)).